A 212-amino-acid chain; its full sequence is MYNKLQYISQGNTIEDQVRNIHQALDSGCDWIQMRFKNQTEKDSFILAEEIKLLCEKYLASFIINDNLYLAQQINADGVHLGLSDMKIDEARTILGAEKIIGGTANTFEDIQNHVKNGCNYIGLGPFRFTNTKEKLSPILGLSGYFEILQKMKKNKIEVPVYAIGGITLKDINPLMETGIHGIAVSGIITESDEKKILIQQLNEKLYANVIV.

4-amino-2-methyl-5-(diphosphooxymethyl)pyrimidine contacts are provided by residues 33–37 (QMRFK) and asparagine 65. The Mg(2+) site is built by aspartate 66 and aspartate 85. Threonine 104 lines the 4-amino-2-methyl-5-(diphosphooxymethyl)pyrimidine pocket. A 2-[(2R,5Z)-2-carboxy-4-methylthiazol-5(2H)-ylidene]ethyl phosphate-binding site is contributed by 130 to 132 (TNT). Residue lysine 133 participates in 4-amino-2-methyl-5-(diphosphooxymethyl)pyrimidine binding. Residue glycine 166 participates in 2-[(2R,5Z)-2-carboxy-4-methylthiazol-5(2H)-ylidene]ethyl phosphate binding.

This sequence belongs to the thiamine-phosphate synthase family. The cofactor is Mg(2+).

It catalyses the reaction 2-[(2R,5Z)-2-carboxy-4-methylthiazol-5(2H)-ylidene]ethyl phosphate + 4-amino-2-methyl-5-(diphosphooxymethyl)pyrimidine + 2 H(+) = thiamine phosphate + CO2 + diphosphate. It carries out the reaction 2-(2-carboxy-4-methylthiazol-5-yl)ethyl phosphate + 4-amino-2-methyl-5-(diphosphooxymethyl)pyrimidine + 2 H(+) = thiamine phosphate + CO2 + diphosphate. The catalysed reaction is 4-methyl-5-(2-phosphooxyethyl)-thiazole + 4-amino-2-methyl-5-(diphosphooxymethyl)pyrimidine + H(+) = thiamine phosphate + diphosphate. Its pathway is cofactor biosynthesis; thiamine diphosphate biosynthesis; thiamine phosphate from 4-amino-2-methyl-5-diphosphomethylpyrimidine and 4-methyl-5-(2-phosphoethyl)-thiazole: step 1/1. In terms of biological role, condenses 4-methyl-5-(beta-hydroxyethyl)thiazole monophosphate (THZ-P) and 2-methyl-4-amino-5-hydroxymethyl pyrimidine pyrophosphate (HMP-PP) to form thiamine monophosphate (TMP). In Flavobacterium johnsoniae (strain ATCC 17061 / DSM 2064 / JCM 8514 / BCRC 14874 / CCUG 350202 / NBRC 14942 / NCIMB 11054 / UW101) (Cytophaga johnsonae), this protein is Thiamine-phosphate synthase.